The chain runs to 261 residues: uncharacterized protein (261 aa).

22–46 (IVTGGNSGLGQAFAMALAKAGANIF) provides a ligand contact to NADP(+). Serine 153 provides a ligand contact to substrate. Residue tyrosine 166 is the Proton acceptor of the active site.

This sequence belongs to the short-chain dehydrogenases/reductases (SDR) family.

This is an uncharacterized protein from Escherichia coli (strain K12).